The chain runs to 615 residues: 1-deoxy-D-xylulose-5-phosphate synthase (615 aa).

Residues H76 and 117–119 (GHS) contribute to the thiamine diphosphate site. D148 lines the Mg(2+) pocket. Thiamine diphosphate-binding positions include 149 to 150 (GA), N177, Y284, and E365. Residue N177 participates in Mg(2+) binding.

Belongs to the transketolase family. DXPS subfamily. As to quaternary structure, homodimer. Mg(2+) serves as cofactor. Thiamine diphosphate is required as a cofactor.

The catalysed reaction is D-glyceraldehyde 3-phosphate + pyruvate + H(+) = 1-deoxy-D-xylulose 5-phosphate + CO2. The protein operates within metabolic intermediate biosynthesis; 1-deoxy-D-xylulose 5-phosphate biosynthesis; 1-deoxy-D-xylulose 5-phosphate from D-glyceraldehyde 3-phosphate and pyruvate: step 1/1. In terms of biological role, catalyzes the acyloin condensation reaction between C atoms 2 and 3 of pyruvate and glyceraldehyde 3-phosphate to yield 1-deoxy-D-xylulose-5-phosphate (DXP). This Francisella tularensis subsp. novicida (strain U112) protein is 1-deoxy-D-xylulose-5-phosphate synthase.